Reading from the N-terminus, the 1355-residue chain is Phospholipid-transporting ATPase DRS2 (1355 aa).

The segment covering 1–15 (MNDDRETPPKRKPGE) has biased composition (basic and acidic residues). A disordered region spans residues 1–50 (MNDDRETPPKRKPGEDDTLFDIDFLDDTTSHSGSRSKVTNSHANANYIPP). The interval 1–104 (MNDDRETPPK…SDAYQPQSLR (104 aa)) is involved in autoinhibition. Topologically, residues 1 to 221 (MNDDRETPPK…TFLPKFLFQE (221 aa)) are cytoplasmic. Positions 16-26 (DDTLFDIDFLD) are enriched in acidic residues. Residues 30 to 44 (SHSGSRSKVTNSHAN) show a composition bias toward polar residues. Position 102 is a phosphoserine (Ser102). The chain crosses the membrane as a helical span at residues 222-242 (FSKYANLFFLCTSAIQQVPHV). Residues 237 to 238 (QQ) form an involved in phosphatidylserine substrate recognition region. At 243 to 246 (SPTN) the chain is on the lumenal side. The chain crosses the membrane as a helical span at residues 247 to 267 (RYTTIGTLLVVLIVSAMKECI). At 268–449 (EDIKRANSDK…VEKIINRQII (182 aa)) the chain is on the cytoplasmic side. A helical membrane pass occupies residues 450-470 (ALFTVLIVLILISSIGNVIMS). Residues 471-490 (TADAKHLSYLYLEGTNKAGL) are Lumenal-facing. A helical transmembrane segment spans residues 491-511 (FFKDFLTFWILFSNLVPISLF). The Cytoplasmic portion of the chain corresponds to 512 to 1012 (VTVELIKYYQ…WSYQRISVAI (501 aa)). The 4-aspartylphosphate intermediate role is filled by Asp560. ATP contacts are provided by Asp560, Lys561, Thr562, Glu655, Phe698, Ser700, Lys703, Lys721, Arg755, Thr756, Thr835, Gly836, Asp837, Arg928, and Lys934. Asp560 is a Mg(2+) binding site. Thr562 is a binding site for Mg(2+). Asp954 serves as a coordination point for Mg(2+). Asn957 and Asp958 together coordinate ATP. Mg(2+) is bound at residue Asp958. A helical transmembrane segment spans residues 1013–1033 (LYSFYKNTALYMTQFWYVFAN). The Lumenal portion of the chain corresponds to 1034–1043 (AFSGQSIMES). The chain crosses the membrane as a helical span at residues 1044 to 1064 (WTMSFYNLFFTVWPPFVIGVF). Residues 1065-1094 (DQFVSSRLLERYPQLYKLGQKGQFFSVYIF) are Cytoplasmic-facing. A helical transmembrane segment spans residues 1095-1115 (WGWIINGFFHSAIVFIGTILI). The Lumenal portion of the chain corresponds to 1116-1131 (YRYGFALNMHGELADH). Residues 1132–1152 (WSWGVTVYTTSVIIVLGKAAL) traverse the membrane as a helical segment. Lys1149 provides a ligand contact to a 1,2-diacyl-sn-glycero-3-phospho-(1D-myo-inositol 4-phosphate). Topologically, residues 1153-1161 (VTNQWTKFT) are cytoplasmic. A helical membrane pass occupies residues 1162 to 1182 (LIAIPGSLLFWLIFFPIYASI). Residues 1183-1202 (FPHANISREYYGVVKHTYGS) are Lumenal-facing. The chain crosses the membrane as a helical span at residues 1203 to 1223 (GVFWLTLIVLPIFALVRDFLW). Residues Arg1219, Trp1223, Lys1224, Tyr1235, and His1236 each contribute to the a 1,2-diacyl-sn-glycero-3-phospho-(1D-myo-inositol 4-phosphate) site. The Cytoplasmic segment spans residues 1224-1355 (KYYKRMYEPE…SSRDDISFDI (132 aa)). An interaction with GEA2 region spans residues 1230–1282 (YEPETYHVIQEMQKYNISDSRPHVQQFQNAIRKVRQVQRMKKQRGFAFSQAEE). The involved in autoinhibition stretch occupies residues 1231-1309 (EPETYHVIQE…KYGELQDASA (79 aa)). The segment at 1305-1355 (QDASANPFNDNNGLGSNDFESAEPFIENPFADGNQNSNRFSSSRDDISFDI) is disordered. Over residues 1307–1323 (ASANPFNDNNGLGSNDF) the composition is skewed to polar residues. The segment covering 1346-1355 (SSRDDISFDI) has biased composition (basic and acidic residues).

It belongs to the cation transport ATPase (P-type) (TC 3.A.3) family. Type IV subfamily. As to quaternary structure, component of a flippase complex consisting of DRS2 and CDC50. Interacts with CDC50; the interaction is direct, is required for their mutual export from the endoplasmic reticulum, and preferentially occurs when DRS2 is in the E2P state. Interacts (via C-terminus) with GEA2 (via SEC7 domain); the interaction is direct. Interacts with GEA1. It depends on Mg(2+) as a cofactor.

Its subcellular location is the golgi apparatus. It localises to the trans-Golgi network membrane. The protein localises to the endosome membrane. The catalysed reaction is ATP + H2O + phospholipidSide 1 = ADP + phosphate + phospholipidSide 2.. The enzyme catalyses a 1,2-diacyl-sn-glycero-3-phospho-L-serine(out) + ATP + H2O = a 1,2-diacyl-sn-glycero-3-phospho-L-serine(in) + ADP + phosphate + H(+). It catalyses the reaction a 1,2-diacyl-sn-glycero-3-phosphoethanolamine(out) + ATP + H2O = a 1,2-diacyl-sn-glycero-3-phosphoethanolamine(in) + ADP + phosphate + H(+). Allosterically activated by binding 1,2-diacyl-sn-glycero-3-phospho-(1D-myo-inositol 4-phosphate) (phosphatidylinositol 4-phosphate). Inhibited by orthovanadate, N-ethylmaleimide, trifluoroberyllate and tetrafluoroaluminate; orthovanadate and N-ethylmaleimide inhibit phosphorylation of the active site aspartic acid. The ATPase activity is not potently stimulated by phosphatidylinositol 3-phosphate and phosphatidylinositol 5-phosphate, phosphatidylinositol 4,5-bisphosphate or phosphatidylcholine. Not inhibited by azide. Its function is as follows. Catalytic component of a P4-ATPase flippase complex which catalyzes the hydrolysis of ATP coupled to the transport of phosphatidylserine and small amounts of ethanolamine from the lumen to the cytosolic leaflet of the trans-Golgi network and ensures the maintenance of asymmetric distribution of phospholipids. Contributes to clathrin-coated vesicle formation, endocytosis, and protein trafficking between the Golgi and endosomal system. Does not appear to transport phosphatidylcholine or sphingomyelin. This is Phospholipid-transporting ATPase DRS2 from Saccharomyces cerevisiae (strain ATCC 204508 / S288c) (Baker's yeast).